A 243-amino-acid chain; its full sequence is MAEKACIKRLQKEYRALCKEPVSHVVARPSPNDILEWHYVLEGSEGTPFAGGFYYGKIKFPPEYPYKPPGITMTTPNGRFVTQKKICLSMSDFHPESWNPMWSVSSILTGLLSFMMDNSPTTGSVNTSVAEKQRLAKSSLAFNCKSVTFRKLFPEYVEKYSQQQVAEEEAATQQTTTSENQDFPQKDNAKVESEKSVGLKKESIQEVGLKERRRNKKEALPGWIVLLLVSIVGVVMALPLLQL.

The 158-residue stretch at 5–162 (ACIKRLQKEY…FPEYVEKYSQ (158 aa)) folds into the UBC core domain. Cysteine 87 (glycyl thioester intermediate) is an active-site residue. Residues 168-197 (EEAATQQTTTSENQDFPQKDNAKVESEKSV) are disordered. Positions 184–197 (PQKDNAKVESEKSV) are enriched in basic and acidic residues. A helical transmembrane segment spans residues 220–240 (LPGWIVLLLVSIVGVVMALPL).

This sequence belongs to the ubiquitin-conjugating enzyme family.

The protein resides in the membrane. The enzyme catalyses S-ubiquitinyl-[E1 ubiquitin-activating enzyme]-L-cysteine + [E2 ubiquitin-conjugating enzyme]-L-cysteine = [E1 ubiquitin-activating enzyme]-L-cysteine + S-ubiquitinyl-[E2 ubiquitin-conjugating enzyme]-L-cysteine.. Its pathway is protein modification; protein ubiquitination. Its function is as follows. Accepts the ubiquitin from the E1 complex and catalyzes its covalent attachment to other proteins. The polypeptide is Probable ubiquitin-conjugating enzyme E2 33 (UBC33) (Arabidopsis thaliana (Mouse-ear cress)).